The following is a 103-amino-acid chain: Small ribosomal subunit protein uS10 (103 aa).

This sequence belongs to the universal ribosomal protein uS10 family. As to quaternary structure, part of the 30S ribosomal subunit.

Functionally, involved in the binding of tRNA to the ribosomes. The polypeptide is Small ribosomal subunit protein uS10 (Paraburkholderia xenovorans (strain LB400)).